Consider the following 214-residue polypeptide: cAMP-activated global transcriptional regulator Vfr (214 aa).

3',5'-cyclic AMP contacts are provided by residues 59–60 (RE), 73–75 (GEL), 87–88 (RS), 132–133 (TT), R179, and R185. Residues 142-214 (LDVTGRVART…GKTMVVFGTR (73 aa)) enclose the HTH crp-type domain. A DNA-binding region (H-T-H motif) is located at residues 174–193 (RQEIGRIVGCSREMVGRVLK).

Homodimer.

In terms of biological role, global cAMP-dependent transcriptional regulator that controls virulence gene expression by distinct cAMP-dependent and -independent mechanisms, which allow to fine tune its virulence program in response to specific host cues or environments. Controls the expression of many regulatory targets including type II, type III and type IV secretion systems, flagellar-mediated motility, and quorum sensing systems. Transcriptional control is exerted by binding to a well-characterized consensus site (5'-ANWWTGNGAWNYAGWTCACAT) within target promoters. Directly binds to the toxA upstream region to regulate exotoxin A production, to the lasR gene promoter to activate the las quorum-sensing system or to the exsA promoter to regulate type III secretion system. Autoregulates as well its own expression. This chain is cAMP-activated global transcriptional regulator Vfr (vfr), found in Pseudomonas aeruginosa (strain ATCC 15692 / DSM 22644 / CIP 104116 / JCM 14847 / LMG 12228 / 1C / PRS 101 / PAO1).